Here is a 141-residue protein sequence, read N- to C-terminus: ATP synthase epsilon chain (141 aa).

Belongs to the ATPase epsilon chain family. F-type ATPases have 2 components, CF(1) - the catalytic core - and CF(0) - the membrane proton channel. CF(1) has five subunits: alpha(3), beta(3), gamma(1), delta(1), epsilon(1). CF(0) has three main subunits: a, b and c.

It localises to the cell membrane. Functionally, produces ATP from ADP in the presence of a proton gradient across the membrane. The sequence is that of ATP synthase epsilon chain from Mycoplasma mobile (strain ATCC 43663 / 163K / NCTC 11711) (Mesomycoplasma mobile).